Reading from the N-terminus, the 290-residue chain is Acetyl-coenzyme A carboxylase carboxyl transferase subunit beta (290 aa).

A CoA carboxyltransferase N-terminal domain is found at 28 to 290 (LMNKCSKCGT…TVREGLSHGG (263 aa)). Residues Cys-32, Cys-35, Cys-51, and Cys-54 each coordinate Zn(2+). Residues 32 to 54 (CSKCGTIQYSKELDKNLKVCSSC) form a C4-type zinc finger.

It belongs to the AccD/PCCB family. As to quaternary structure, acetyl-CoA carboxylase is a heterohexamer composed of biotin carboxyl carrier protein (AccB), biotin carboxylase (AccC) and two subunits each of ACCase subunit alpha (AccA) and ACCase subunit beta (AccD). The cofactor is Zn(2+).

The protein localises to the cytoplasm. The enzyme catalyses N(6)-carboxybiotinyl-L-lysyl-[protein] + acetyl-CoA = N(6)-biotinyl-L-lysyl-[protein] + malonyl-CoA. It functions in the pathway lipid metabolism; malonyl-CoA biosynthesis; malonyl-CoA from acetyl-CoA: step 1/1. In terms of biological role, component of the acetyl coenzyme A carboxylase (ACC) complex. Biotin carboxylase (BC) catalyzes the carboxylation of biotin on its carrier protein (BCCP) and then the CO(2) group is transferred by the transcarboxylase to acetyl-CoA to form malonyl-CoA. This Paenibacillus sp. (strain JDR-2) protein is Acetyl-coenzyme A carboxylase carboxyl transferase subunit beta.